A 294-amino-acid polypeptide reads, in one-letter code: Probable 2-(5''-triphosphoribosyl)-3'-dephosphocoenzyme-A synthase (294 aa).

It belongs to the CitG/MdcB family.

It carries out the reaction 3'-dephospho-CoA + ATP = 2'-(5''-triphospho-alpha-D-ribosyl)-3'-dephospho-CoA + adenine. This Streptococcus pyogenes serotype M49 (strain NZ131) protein is Probable 2-(5''-triphosphoribosyl)-3'-dephosphocoenzyme-A synthase.